Consider the following 105-residue polypeptide: Malonate decarboxylase acyl carrier protein (105 aa).

An O-(phosphoribosyl dephospho-coenzyme A)serine modification is found at Ser-28.

Belongs to the MdcC family. Covalently binds the prosthetic group of malonate decarboxylase.

The protein localises to the cytoplasm. In terms of biological role, subunit of malonate decarboxylase, it is an acyl carrier protein to which acetyl and malonyl thioester residues are bound via a 2'-(5''-phosphoribosyl)-3'-dephospho-CoA prosthetic group and turn over during the catalytic mechanism. The chain is Malonate decarboxylase acyl carrier protein from Xanthomonas campestris pv. campestris (strain 8004).